Reading from the N-terminus, the 120-residue chain is Immunoglobulin kappa variable 2D-28 (120 aa).

A signal peptide spans Met1–Ser19. The region spanning Gly20–Pro120 is the Ig-like domain. The interval Asp21–Cys43 is framework-1. Residues Cys43 and Cys113 are joined by a disulfide bond. Residues Arg44–Asp59 are complementarity-determining-1. Positions Trp60 to Tyr74 are framework-2. A complementarity-determining-2 region spans residues Leu75–Ser81. A framework-3 region spans residues Gly82–Cys113. A complementarity-determining-3 region spans residues Met114–Pro120.

In terms of assembly, immunoglobulins are composed of two identical heavy chains and two identical light chains; disulfide-linked.

It localises to the secreted. The protein localises to the cell membrane. Functionally, v region of the variable domain of immunoglobulin light chains that participates in the antigen recognition. Immunoglobulins, also known as antibodies, are membrane-bound or secreted glycoproteins produced by B lymphocytes. In the recognition phase of humoral immunity, the membrane-bound immunoglobulins serve as receptors which, upon binding of a specific antigen, trigger the clonal expansion and differentiation of B lymphocytes into immunoglobulins-secreting plasma cells. Secreted immunoglobulins mediate the effector phase of humoral immunity, which results in the elimination of bound antigens. The antigen binding site is formed by the variable domain of one heavy chain, together with that of its associated light chain. Thus, each immunoglobulin has two antigen binding sites with remarkable affinity for a particular antigen. The variable domains are assembled by a process called V-(D)-J rearrangement and can then be subjected to somatic hypermutations which, after exposure to antigen and selection, allow affinity maturation for a particular antigen. In Homo sapiens (Human), this protein is Immunoglobulin kappa variable 2D-28.